The sequence spans 258 residues: MSRREDGRQDDELRPVTITRGFTSHPAGSVLIEFGQTRVMCTASATEGVPRWRKGSGLGWLTAEYAMLPASTHTRSDRESVKGRVGGRTQEISRLIGRSLRACIDLSALGENTIAIDCDVLQADGGTRTAAITGAYVALADAVTYLAAHGKLADDEPLSCAIAAVSVGVVDGRVRVDLPYEEDSRAEVDMNVVATDTGTLVEVQGTGEGATFARSTLDKLLDAAVGAADQLFVLQKEALALPYPGVLPDAPQKKAFGS.

Phosphate-binding positions include arginine 88 and 126 to 128 (GTR).

It belongs to the RNase PH family. Homohexameric ring arranged as a trimer of dimers.

The enzyme catalyses tRNA(n+1) + phosphate = tRNA(n) + a ribonucleoside 5'-diphosphate. Phosphorolytic 3'-5' exoribonuclease that plays an important role in tRNA 3'-end maturation. Removes nucleotide residues following the 3'-CCA terminus of tRNAs; can also add nucleotides to the ends of RNA molecules by using nucleoside diphosphates as substrates, but this may not be physiologically important. Probably plays a role in initiation of 16S rRNA degradation (leading to ribosome degradation) during starvation. The polypeptide is Ribonuclease PH (Mycobacteroides abscessus (strain ATCC 19977 / DSM 44196 / CCUG 20993 / CIP 104536 / JCM 13569 / NCTC 13031 / TMC 1543 / L948) (Mycobacterium abscessus)).